The following is a 76-amino-acid chain: Membrane protein UL43 homolog (76 aa).

Helical transmembrane passes span 7-27 and 54-74; these read AVCV…SLAF and ISRW…ATII.

It belongs to the alphaherpesvirinae HHV-1 UL43 family.

It is found in the membrane. The sequence is that of Membrane protein UL43 homolog from Equus caballus (Horse).